The chain runs to 37 residues: Photosystem I reaction center subunit VIII (37 aa).

The chain crosses the membrane as a helical span at residues 9–29; it reads SIFVPLVGLVFPAIAMASLFL.

This sequence belongs to the PsaI family.

Its subcellular location is the plastid. It is found in the chloroplast thylakoid membrane. May help in the organization of the PsaL subunit. This chain is Photosystem I reaction center subunit VIII, found in Cucumis sativus (Cucumber).